The sequence spans 806 residues: MGDILAYEADLLGLVKEFLNFGEFQETLECFSKECKIKGKLLPRTSGSSLRESKTLLIQKDLITAFEDGDIKEFFALWQEHIPVETQNTNPVAQKLEFYLQIHFAIFPLKQSQGRIDRVDCEERISHFKTYLETSGAALSQTTEFLPFYALPFVPNPAAHPSFKEIFQESWEAELKMRLEKFLSVILKAASTPKLITLYKESLHNNQEQLQQLQQQLMETEHKARTYKKCFNKMQSDYHNLIGVTADLVDSLEATINGKLITPEYLQSVCTRLFSAQMKQSSAQSIDFTRPGTASSMLRASIAPLKQQEVPLFPSLDYEKLKKDLVFGNDRLKAFILQALRWRLTRSQPGEQRNTVLQAYISNDLLDCQHNEQKNVLILLRSPSEVVRQYTALLIDVCASLGYGRVYLSQNPRLLHSLVEAWKAEEKESIARETVLGILQKLSLRRSMQSAMIKDDLIFWLVRELEDPDHLSDYALQYTIALFMNLCLRTAGRKLCSRDADHVLKVLSDLLGHENHEIRSYVNGALYSILAVPSIREEARSMGMEEILRWYIREGNPDMNCHIEFIIRQLNSEDKFDESVESDDEEEEKDDEEDEDALEADLDKDEIIHAQSGELSGEKLLTTDYLGIMTNSFKVKKRMFAGILQSADEPLQRPVTPSSHRAMNTVRKNSNSPSPLTNTFKSSQANKMSLSSSRPPTRSGSRASSSDSIDSEASRLFSPNSLTDHRGAMSPTSPRILDLGMEKNIVQNSSKAWLPRSPEVQNATSRKTRTPTIAPQFSQSGPQQTSYSSSAGSSTRSRQSTQSYRK.

The LisH domain maps to 7-39; that stretch reads YEADLLGLVKEFLNFGEFQETLECFSKECKIKG. Positions 194-230 form a coiled coil; it reads KLITLYKESLHNNQEQLQQLQQQLMETEHKARTYKKC. Disordered regions lie at residues 576–604, 650–736, and 748–806; these read FDES…DLDK, PLQR…SPRI, and NSSK…SYRK. Over residues 579-604 the composition is skewed to acidic residues; sequence SVESDDEEEEKDDEEDEDALEADLDK. Over residues 655–688 the composition is skewed to polar residues; it reads VTPSSHRAMNTVRKNSNSPSPLTNTFKSSQANKM. The segment covering 689 to 708 has biased composition (low complexity); the sequence is SLSSSRPPTRSGSRASSSDS. Residues 759-782 are compositionally biased toward polar residues; the sequence is EVQNATSRKTRTPTIAPQFSQSGP. Low complexity predominate over residues 783 to 806; it reads QQTSYSSSAGSSTRSRQSTQSYRK.

The protein localises to the cytoplasm. It is found in the cytoskeleton. The protein resides in the cilium basal body. Its subcellular location is the cell projection. It localises to the cilium. The protein localises to the microtubule organizing center. It is found in the centrosome. The protein resides in the centriole. Functionally, involved in ciliogenesis. It is required for appropriate acetylation and polyglutamylation of ciliary microtubules, and regulation of cilium length. Acts as a positive regulator of hedgehog (Hh)signaling. This is LisH domain-containing protein ARMC9 (armc9) from Xenopus laevis (African clawed frog).